The following is a 273-amino-acid chain: Large ribosomal subunit protein uL2 (273 aa).

The tract at residues 221–262 (RGTAMNPVDHPHGGGEGRNFGKHPVTPWGVQTKGKKTRHNKR) is disordered. Basic residues predominate over residues 253–262 (KGKKTRHNKR).

Belongs to the universal ribosomal protein uL2 family. In terms of assembly, part of the 50S ribosomal subunit. Forms a bridge to the 30S subunit in the 70S ribosome.

Its function is as follows. One of the primary rRNA binding proteins. Required for association of the 30S and 50S subunits to form the 70S ribosome, for tRNA binding and peptide bond formation. It has been suggested to have peptidyltransferase activity; this is somewhat controversial. Makes several contacts with the 16S rRNA in the 70S ribosome. The chain is Large ribosomal subunit protein uL2 from Haemophilus influenzae (strain ATCC 51907 / DSM 11121 / KW20 / Rd).